The sequence spans 181 residues: MSSLTVYHESQPEQPLKLLTHAEDIASTLAEVGVRFERWEAAAPIAAGASQEEVIAAYAHEIERLKRERGYITVDVVSLDSDHPQKAELRAKFLDEHRHGEDEVRFFVAGRGLFVLHIEEHVYAVLCERNDLISVPAGTRHWFDMGEHPHFVAVRLFNNPEGWVAQFTGDDIASRFPLLED.

Residues His-97, His-99, Glu-103, and His-141 each contribute to the Fe(2+) site. Residues His-97, His-99, Glu-103, and His-141 each coordinate Ni(2+).

Belongs to the acireductone dioxygenase (ARD) family. As to quaternary structure, monomer. Requires Fe(2+) as cofactor. Ni(2+) is required as a cofactor.

The catalysed reaction is 1,2-dihydroxy-5-(methylsulfanyl)pent-1-en-3-one + O2 = 3-(methylsulfanyl)propanoate + CO + formate + 2 H(+). It catalyses the reaction 1,2-dihydroxy-5-(methylsulfanyl)pent-1-en-3-one + O2 = 4-methylsulfanyl-2-oxobutanoate + formate + 2 H(+). It functions in the pathway amino-acid biosynthesis; L-methionine biosynthesis via salvage pathway; L-methionine from S-methyl-5-thio-alpha-D-ribose 1-phosphate: step 5/6. Its function is as follows. Catalyzes 2 different reactions between oxygen and the acireductone 1,2-dihydroxy-3-keto-5-methylthiopentene (DHK-MTPene) depending upon the metal bound in the active site. Fe-containing acireductone dioxygenase (Fe-ARD) produces formate and 2-keto-4-methylthiobutyrate (KMTB), the alpha-ketoacid precursor of methionine in the methionine recycle pathway. Ni-containing acireductone dioxygenase (Ni-ARD) produces methylthiopropionate, carbon monoxide and formate, and does not lie on the methionine recycle pathway. The protein is Acireductone dioxygenase of Pseudomonas paraeruginosa (strain DSM 24068 / PA7) (Pseudomonas aeruginosa (strain PA7)).